Consider the following 495-residue polypeptide: Protein adenylyltransferase Fic (495 aa).

Residues 1-27 (MGTEAEQPSPPSPPAQQQEQTNPPLWN) form a disordered region. Residues 36–55 (LYRLVLFFIAGSLAAWTIHA) traverse the membrane as a helical segment. TPR repeat units lie at residues 121–154 (ALVS…APRH) and 155–189 (PEVL…SPSN). The short motif at 246-251 (SVGIEG) is the Inhibitory (S/T)XXXE(G/N) motif element. Residues Glu250 and 331–334 (VGGH) contribute to the ATP site. The Fido domain maps to 300–435 (ITIKDILELH…IRPFVRFIAD (136 aa)). The active site involves His378. ATP contacts are provided by residues 382–389 (DGNGRTSR), 414–415 (YY), and Asn422.

It belongs to the fic family. As to quaternary structure, homodimer.

It localises to the membrane. The catalysed reaction is L-tyrosyl-[protein] + ATP = O-(5'-adenylyl)-L-tyrosyl-[protein] + diphosphate. The enzyme catalyses L-threonyl-[protein] + ATP = 3-O-(5'-adenylyl)-L-threonyl-[protein] + diphosphate. It catalyses the reaction 3-O-(5'-adenylyl)-L-threonyl-[protein] + H2O = L-threonyl-[protein] + AMP + H(+). Its activity is regulated as follows. The side chain of Glu-250 determines which of the two opposing activities (AMPylase or de-AMPylase) will take place. In response to endoplasmic reticulum stress, mediates de-AMPylase activity. Adenylyltransferase activity is inhibited by the inhibitory helix present at the N-terminus: Glu-250 binds ATP and competes with ATP-binding at Arg-389, thereby preventing adenylyltransferase activity. In unstressed cells, disengagement of Glu-250 promotes adenylyltransferase activity. Activation dissociates ATP-binding from Glu-250, allowing ordered binding of the entire ATP moiety with the alpha-phosphate in an orientation that is productive for accepting an incoming target hydroxyl side chain. Functionally, protein that can both mediate the addition of adenosine 5'-monophosphate (AMP) to specific residues of target proteins (AMPylation), and the removal of the same modification from target proteins (de-AMPylation), depending on the context. The side chain of Glu-250 determines which of the two opposing activities (AMPylase or de-AMPylase) will take place. Acts as a key regulator of the unfolded protein response (UPR) by mediating AMPylation or de-AMPylation of Hsc70-3/BiP. In unstressed cells, acts as an adenylyltransferase by mediating AMPylation of Hsc70-3/BiP at 'Thr-518', thereby inactivating it. In response to endoplasmic reticulum stress, acts as a phosphodiesterase by mediating removal of ATP (de-AMPylation) from Hsc70-3/BiP at 'Thr-518', leading to restore HSPA5/BiP activity. In Drosophila yakuba (Fruit fly), this protein is Protein adenylyltransferase Fic.